A 184-amino-acid chain; its full sequence is Shikimate kinase (184 aa).

20–25 (GVGKSR) is an ATP binding site. Serine 24 serves as a coordination point for Mg(2+). Substrate contacts are provided by aspartate 42, arginine 66, and glycine 88. Arginine 127 lines the ATP pocket. Position 146 (arginine 146) interacts with substrate. Arginine 162 contributes to the ATP binding site.

The protein belongs to the shikimate kinase family. Monomer. Mg(2+) serves as cofactor.

Its subcellular location is the cytoplasm. The catalysed reaction is shikimate + ATP = 3-phosphoshikimate + ADP + H(+). It participates in metabolic intermediate biosynthesis; chorismate biosynthesis; chorismate from D-erythrose 4-phosphate and phosphoenolpyruvate: step 5/7. Its function is as follows. Catalyzes the specific phosphorylation of the 3-hydroxyl group of shikimic acid using ATP as a cosubstrate. The chain is Shikimate kinase from Thermus thermophilus (strain ATCC BAA-163 / DSM 7039 / HB27).